The sequence spans 257 residues: Adenosylcobinamide-GDP ribazoletransferase (257 aa).

Transmembrane regions (helical) follow at residues 4 to 24, 40 to 60, 64 to 84, 116 to 136, 140 to 160, and 193 to 213; these read AVRG…WWLG, VVGL…QWFF, FVVQ…LLHL, AAVA…AALL, AALA…ALLI, and LFVT…VVAV.

It belongs to the CobS family. Requires Mg(2+) as cofactor.

The protein resides in the cell inner membrane. It carries out the reaction alpha-ribazole + adenosylcob(III)inamide-GDP = adenosylcob(III)alamin + GMP + H(+). It catalyses the reaction alpha-ribazole 5'-phosphate + adenosylcob(III)inamide-GDP = adenosylcob(III)alamin 5'-phosphate + GMP + H(+). It participates in cofactor biosynthesis; adenosylcobalamin biosynthesis; adenosylcobalamin from cob(II)yrinate a,c-diamide: step 7/7. In terms of biological role, joins adenosylcobinamide-GDP and alpha-ribazole to generate adenosylcobalamin (Ado-cobalamin). Also synthesizes adenosylcobalamin 5'-phosphate from adenosylcobinamide-GDP and alpha-ribazole 5'-phosphate. This chain is Adenosylcobinamide-GDP ribazoletransferase, found in Alkalilimnicola ehrlichii (strain ATCC BAA-1101 / DSM 17681 / MLHE-1).